We begin with the raw amino-acid sequence, 165 residues long: MPDLLTCDRHQIELSLAPIPLSAAAEFCHDDRYGAFASFVGWVRRVNVGRLVTGITYQSFQPLCRTVLTEICQEAEQVFGQELRIYVQHRLGETRVGDPTVLIGVGAIHRDEACEACRYVIEELKHRAPIWKLEHYEDGDSGWVPGNCLCQERRSRDRRGSTGPE.

Substrate contacts are provided by residues 42-44, 109-110, lysine 125, and 132-134; these read WVR, HR, and KLE.

It belongs to the MoaE family. As to quaternary structure, heterotetramer of 2 MoaD subunits and 2 MoaE subunits. Also stable as homodimer. The enzyme changes between these two forms during catalysis.

It catalyses the reaction 2 [molybdopterin-synthase sulfur-carrier protein]-C-terminal-Gly-aminoethanethioate + cyclic pyranopterin phosphate + H2O = molybdopterin + 2 [molybdopterin-synthase sulfur-carrier protein]-C-terminal Gly-Gly + 2 H(+). It functions in the pathway cofactor biosynthesis; molybdopterin biosynthesis. Functionally, converts molybdopterin precursor Z into molybdopterin. This requires the incorporation of two sulfur atoms into precursor Z to generate a dithiolene group. The sulfur is provided by MoaD. The sequence is that of Molybdopterin synthase catalytic subunit (moaE) from Synechococcus elongatus (strain ATCC 33912 / PCC 7942 / FACHB-805) (Anacystis nidulans R2).